Consider the following 122-residue polypeptide: Large ribosomal subunit protein uL18 (122 aa).

It belongs to the universal ribosomal protein uL18 family. In terms of assembly, part of the 50S ribosomal subunit; part of the 5S rRNA/L5/L18/L25 subcomplex. Contacts the 5S and 23S rRNAs.

Functionally, this is one of the proteins that bind and probably mediate the attachment of the 5S RNA into the large ribosomal subunit, where it forms part of the central protuberance. This Desulforamulus reducens (strain ATCC BAA-1160 / DSM 100696 / MI-1) (Desulfotomaculum reducens) protein is Large ribosomal subunit protein uL18.